Consider the following 349-residue polypeptide: Probable tRNA pseudouridine synthase B (349 aa).

Residue aspartate 41 is the Nucleophile of the active site. Residues 207–279 enclose the PUA domain; the sequence is YPKVIVKETA…KVIDIDNVLI (73 aa). Over residues 300-309 the composition is skewed to basic and acidic residues; it reads IPVQKPERKL. The interval 300 to 349 is disordered; the sequence is IPVQKPERKLHGNLQGSQEWKDTGNRGNPKRGGTGSKGFSSGFRKRKAKR.

This sequence belongs to the pseudouridine synthase TruB family. Type 2 subfamily.

It catalyses the reaction uridine(55) in tRNA = pseudouridine(55) in tRNA. Its function is as follows. Could be responsible for synthesis of pseudouridine from uracil-55 in the psi GC loop of transfer RNAs. The chain is Probable tRNA pseudouridine synthase B from Picrophilus torridus (strain ATCC 700027 / DSM 9790 / JCM 10055 / NBRC 100828 / KAW 2/3).